A 277-amino-acid chain; its full sequence is Adenylate kinase (277 aa).

An ATP-binding site is contributed by 53–58; the sequence is GAGKGT. An NMP region spans residues 73–102; that stretch reads ATGDMLRAQVAAKTPLGREAKKIMDAGGLV. Residues Thr-74, Arg-79, 100 to 102, 129 to 132, and Gln-136 contribute to the AMP site; these read GLV and GFPR. An LID region spans residues 170–207; the sequence is GRLVHPASGRSYHKIFNPPKAPMTDDATGEPLIQRSDD. ATP-binding positions include Arg-171 and 180-181; that span reads SY. Residues Arg-204 and Arg-215 each contribute to the AMP site. Gln-243 contributes to the ATP binding site.

This sequence belongs to the adenylate kinase family. AK2 subfamily. As to quaternary structure, monomer.

Its subcellular location is the cytoplasm. The protein localises to the cytosol. It is found in the mitochondrion intermembrane space. It carries out the reaction AMP + ATP = 2 ADP. Functionally, catalyzes the reversible transfer of the terminal phosphate group between ATP and AMP. Plays an important role in cellular energy homeostasis and in adenine nucleotide metabolism. Adenylate kinase activity is critical for regulation of the phosphate utilization and the AMP de novo biosynthesis pathways. The polypeptide is Adenylate kinase (Phaeosphaeria nodorum (strain SN15 / ATCC MYA-4574 / FGSC 10173) (Glume blotch fungus)).